Consider the following 383-residue polypeptide: tRNA-specific 2-thiouridylase MnmA (383 aa).

ATP is bound by residues 30-37 (GMSGGVDS) and methionine 56. Residues 116 to 118 (NPD) are interaction with target base in tRNA. The active-site Nucleophile is the cysteine 121. Cysteine 121 and cysteine 218 are joined by a disulfide. An ATP-binding site is contributed by glycine 146. The segment at 168 to 170 (KDQ) is interaction with tRNA. The Cysteine persulfide intermediate role is filled by cysteine 218. Residues 330–331 (RY) are interaction with tRNA.

It belongs to the MnmA/TRMU family.

It is found in the cytoplasm. The enzyme catalyses S-sulfanyl-L-cysteinyl-[protein] + uridine(34) in tRNA + AH2 + ATP = 2-thiouridine(34) in tRNA + L-cysteinyl-[protein] + A + AMP + diphosphate + H(+). Functionally, catalyzes the 2-thiolation of uridine at the wobble position (U34) of tRNA, leading to the formation of s(2)U34. This Haemophilus influenzae (strain ATCC 51907 / DSM 11121 / KW20 / Rd) protein is tRNA-specific 2-thiouridylase MnmA.